The sequence spans 358 residues: Diels-Alderase phmD (358 aa).

It belongs to the Diels-Alderase family.

It functions in the pathway mycotoxin biosynthesis. Functionally, diels-Alderase; part of the gene cluster that mediates the biosynthesis of the mycotoxins phomacins, leucine-derived cytochalasans with potent actin polymerization-inhibitory activities and monocot-specific antigerminative activities. The first step in the pathway is catalyzed by the hybrid PKS-NRPS phmA, assisted by the enoyl reductase phmE, that are responsible for fusion of the leucine precursor and the polyketide backbone to produce a 2-pyrrolidone intermediate. The polyketide synthase module (PKS) of phmA is responsible for the synthesis of the polyketide backbone and the downstream nonribosomal peptide synthetase (NRPS) amidates the carboxyl end of the polyketide with the leucine precursor. Because phmA lacks a designated enoylreductase (ER) domain, the required activity is provided the enoyl reductase phmE. Reduction by the hydrolyase phmG, followed by dehydration and intra-molecular Diels-Alder cyclization by the Diels-Alderase phmD then yield the required isoindolone-fused macrocycle. A number of oxidative steps catalyzed by the tailoring cytochrome P450 monooxygenase phmB, the FAD-linked oxidoreductase phmC and the short-chain dehydrogenase/reductase phmF, are further required to afford the final products, phomacin D and phomacin E. In Phaeosphaeria nodorum (strain SN15 / ATCC MYA-4574 / FGSC 10173) (Glume blotch fungus), this protein is Diels-Alderase phmD.